Reading from the N-terminus, the 348-residue chain is Cylicin-2 (348 aa).

Residues 25-347 (KKSWNQQHFA…DEKKDAKKKG (323 aa)) form a 31 X 3 AA repeats of K-K-X region. Disordered stretches follow at residues 35 to 59 (LLFPKPQRPGTKRRSKPSQIRDNTV) and 101 to 348 (PTRT…KKGK). Composition is skewed to basic and acidic residues over residues 103-159 (RTVE…DAKK), 166-217 (KDAE…EKDS), 238-267 (KADEKKDEDGKKDANKGDESKDAKKDAKEI), and 276-342 (KPSS…EKKD). 3 consecutive repeat copies span residues 157 to 184 (AKKDSKKGKKDAEKGKDSATESEDEKGG), 185 to 212 (AKKDNKKDKKDSNKGKDSATESEGEKGG), and 213 to 240 (TEKDSKKGKKDSKKGKDSAIELQAVKAD). Residues 157-240 (AKKDSKKGKK…AIELQAVKAD (84 aa)) are 3 X approximate tandem repeats.

As to expression, testis.

The protein localises to the cytoplasm. Its subcellular location is the cytoskeleton. It localises to the perinuclear theca. The protein resides in the calyx. Plays a role in the establishment of normal sperm morphology during spermatogenesis. It is required for acrosome attachment to the nuclear envelope, and proper manchette elongation and disassembly. The polypeptide is Cylicin-2 (CYLC2) (Homo sapiens (Human)).